Here is a 1316-residue protein sequence, read N- to C-terminus: Myosin-5 (1316 aa).

Basic residues predominate over residues 1–12; the sequence is MAIVKRGGRTKT. The disordered stretch occupies residues 1–29; that stretch reads MAIVKRGGRTKTKQQQVPAKSSGGGSSGG. Residues 43 to 731 form the Myosin motor domain; it reads VGVSDLTLLS…TLFALEDMRD (689 aa). 136-143 contacts ATP; sequence GESGAGKT. Ser366 is subject to Phosphoserine. The segment at 414–497 is actin-binding; that stretch reads SIGILDIYGF…PGLFAALNDS (84 aa). 2 IQ domains span residues 735-755 and 756-781; these read HNMA…KEDA and AKTI…YGNG. Residues 789-981 form the TH1 domain; it reads RRRMSMLGSR…TVSVKQGLPA (193 aa). 2 disordered regions span residues 964-1154 and 1209-1316; these read NGDH…PTLV and DYLK…DDDW. Polar residues-rich tracts occupy residues 971–984 and 1018–1030; these read GTVS…ASSK and PRYN…ANSG. The segment covering 1042-1065 has biased composition (low complexity); that stretch reads QPQQYQPQQSQQQTPYPTQSSIPS. Positions 1097–1106 are enriched in polar residues; it reads SPTQQRQTPA. Residues 1117–1129 show a composition bias toward low complexity; that stretch reads ASTTIATTTSHTS. A compositionally biased stretch (pro residues) spans 1137 to 1153; the sequence is PAPPVKKTAPPPPPPTL. In terms of domain architecture, SH3 spans 1156–1216; that stretch reads PKFPTYKAMF…PIDYLKECSP (61 aa). Over residues 1223-1232 the composition is skewed to pro residues; that stretch reads APPPPPPPPA. Over residues 1233–1268 the composition is skewed to low complexity; that stretch reads ATASAGANGASNPISTTTSTNTTTSSHTTNATSNGS. Acidic residues predominate over residues 1305–1316; the sequence is SDDEEEEDDDDW.

Belongs to the TRAFAC class myosin-kinesin ATPase superfamily. Myosin family. In terms of processing, phosphorylation of the TEDS site (Ser-366) is required for the polarization of the actin cytoskeleton. Phosphorylation probably activates the myosin-I ATPase activity.

The protein resides in the cytoplasm. It localises to the cytoskeleton. The protein localises to the actin patch. Functionally, type-I myosin implicated in the organization of the actin cytoskeleton. Required for proper actin cytoskeleton polarization and for the internalization step in endocytosis. At the cell cortex, assembles in patch-like structures together with proteins from the actin-polymerizing machinery and promotes actin assembly. Functions as actin nucleation-promoting factor (NPF) for the Arp2/3 complex. Plays a role in chitin deposition in the cell wall, in determination of the budding pattern, and is required for hyphae formation. The polypeptide is Myosin-5 (MYO5) (Candida albicans (strain SC5314 / ATCC MYA-2876) (Yeast)).